A 206-amino-acid polypeptide reads, in one-letter code: Large ribosomal subunit protein uL4 (206 aa).

Residues 44–87 (KRQGTHATKTRGMKRGGGAKPWRQKGTGRARAGSTRSPLWRGGG) form a disordered region.

The protein belongs to the universal ribosomal protein uL4 family. As to quaternary structure, part of the 50S ribosomal subunit.

Its function is as follows. One of the primary rRNA binding proteins, this protein initially binds near the 5'-end of the 23S rRNA. It is important during the early stages of 50S assembly. It makes multiple contacts with different domains of the 23S rRNA in the assembled 50S subunit and ribosome. In terms of biological role, forms part of the polypeptide exit tunnel. The chain is Large ribosomal subunit protein uL4 from Maridesulfovibrio salexigens (strain ATCC 14822 / DSM 2638 / NCIMB 8403 / VKM B-1763) (Desulfovibrio salexigens).